A 103-amino-acid chain; its full sequence is Putative double-stranded DNA mimic protein HAPS_1002 (103 aa).

It belongs to the putative dsDNA mimic protein family.

In terms of biological role, may act as a double-stranded DNA (dsDNA) mimic. Probably regulates the activity of a dsDNA-binding protein. In Glaesserella parasuis serovar 5 (strain SH0165) (Haemophilus parasuis), this protein is Putative double-stranded DNA mimic protein HAPS_1002.